Here is a 114-residue protein sequence, read N- to C-terminus: Nucleoid-associated protein MAB_0319 (114 aa).

It belongs to the YbaB/EbfC family. As to quaternary structure, homodimer.

Its subcellular location is the cytoplasm. The protein localises to the nucleoid. Functionally, binds to DNA and alters its conformation. May be involved in regulation of gene expression, nucleoid organization and DNA protection. The protein is Nucleoid-associated protein MAB_0319 of Mycobacteroides abscessus (strain ATCC 19977 / DSM 44196 / CCUG 20993 / CIP 104536 / JCM 13569 / NCTC 13031 / TMC 1543 / L948) (Mycobacterium abscessus).